A 302-amino-acid polypeptide reads, in one-letter code: Pathogenicity locus probable regulatory protein HrpS (302 aa).

The region spanning 9–237 (DDLDAERVPN…LKAAAKRHVL (229 aa)) is the Sigma-54 factor interaction domain. ATP-binding positions include 37-44 (GETGTGKD) and 99-108 (AQGGTLYLDE). The H-T-H motif DNA-binding region spans 279-298 (IDAASLELDIPRRTLYRRIK).

Functionally, regulates the activation of the sigma factor HrpL which itself induces the expression of hprD as well as other hrp loci which are involved in plant pathogenicity, hrmA and avr genes. Probably interacts with sigma-54. In Pseudomonas syringae pv. syringae, this protein is Pathogenicity locus probable regulatory protein HrpS (hrpS).